The chain runs to 347 residues: Dolichyl-diphosphooligosaccharide--protein glycosyltransferase subunit TUSC3 (347 aa).

The N-terminal stretch at 1–41 is a signal peptide; it reads MSARAAPSRRRQAGRRLRYLPTGSFPFLLLLLLLCIQLGGG. Residues 42-196 are Lumenal-facing; it reads QKKKENLLAE…DVHIRVFRPP (155 aa). The Thioredoxin domain occupies 59–187; it reads WSSRRSIFRM…LAKWIADRTD (129 aa). Asn-83 is a glycosylation site (N-linked (GlcNAc...) asparagine). Residues Cys-99 and Cys-102 are joined by a disulfide bond. A helical transmembrane segment spans residues 197–217; that stretch reads NYSGTIALALLVSLVGGLLYL. Residues 218–221 are Cytoplasmic-facing; the sequence is RRNN. A helical transmembrane segment spans residues 222 to 242; it reads LEFIYNKTGWAMVSLCIVFAM. At 243 to 276 the chain is on the lumenal side; that stretch reads TSGQMWNHIRGPPYAHKNPHNGQVSYIHGSSQAQ. A helical membrane pass occupies residues 277-297; sequence FVAESHIILVLNAAITMGMVL. Residues 298–312 lie on the Cytoplasmic side of the membrane; that stretch reads LNEAATSKGDVGKRR. Residues 313–333 form a helical membrane-spanning segment; that stretch reads IICLVGLGLVVFFFSFLLSIF. The Lumenal portion of the chain corresponds to 334 to 347; the sequence is RSKYHGYPYSFLIK.

Belongs to the OST3/OST6 family. As to quaternary structure, accessory component of the STT3B-containing form of the oligosaccharyltransferase (OST) complex. OST exists in two different complex forms which contain common core subunits RPN1, RPN2, OST48, OST4, DAD1 and TMEM258, either STT3A or STT3B as catalytic subunits, and form-specific accessory subunits. OST can form stable complexes with the Sec61 complex or with both the Sec61 and TRAP complexes. The association of TUSC3 or MAGT1 with the STT3B-containing complex seems to be mutually exclusvice.

The protein localises to the endoplasmic reticulum membrane. It functions in the pathway protein modification; protein glycosylation. Its function is as follows. Acts as accessory component of the N-oligosaccharyl transferase (OST) complex which catalyzes the transfer of a high mannose oligosaccharide from a lipid-linked oligosaccharide donor to an asparagine residue within an Asn-X-Ser/Thr consensus motif in nascent polypeptide chains. Involved in N-glycosylation of STT3B-dependent substrates. Specifically required for the glycosylation of a subset of acceptor sites that are near cysteine residues; in this function seems to act redundantly with MAGT1. In its oxidized form proposed to form transient mixed disulfides with a glycoprotein substrate to facilitate access of STT3B to the unmodified acceptor site. Also has oxidoreductase-independent functions in the STT3B-containing OST complex possibly involving substrate recognition. Could indirectly play a role in Mg(2+) transport. The sequence is that of Dolichyl-diphosphooligosaccharide--protein glycosyltransferase subunit TUSC3 (Tusc3) from Mus musculus (Mouse).